Here is a 379-residue protein sequence, read N- to C-terminus: Gap junction alpha-1 protein (379 aa).

At 2–23 (GDWSALGRLLDKVQAYSTAGGK) the chain is on the cytoplasmic side. Residues 24–44 (VWLSVLFIFRILLLGTAVESA) traverse the membrane as a helical segment. At 45–76 (WGDEQSAFVCNTQQPGCENVCYDKSFPISHVR) the chain is on the extracellular side. 2 cysteine pairs are disulfide-bonded: cysteine 54–cysteine 192 and cysteine 187–cysteine 198. Residues 77 to 97 (FWVLQIIFVSTPTLLYLAHVF) traverse the membrane as a helical segment. At 98 to 163 (YLMRKEEKLN…TYIISILFKS (66 aa)) the chain is on the cytoplasmic side. A helical membrane pass occupies residues 164–184 (VFEVGFIIIQWYMYGFSLSAI). Over 185-207 (YTCKRDPCPHQVDCFLSRPTEKT) the chain is Extracellular. The chain crosses the membrane as a helical span at residues 208–228 (IFIWFMLIVSIVSLALNIIEL). Over 229-379 (FYVTYKSIKD…SRPRPDDLEI (151 aa)) the chain is Cytoplasmic. Positions 322 to 379 (STISNTHAQPFDFSDEHQNTKKMAPGHEMQPLTILDQRPSSRASSHASSRPRPDDLEI) are disordered. The span at 359–371 (RPSSRASSHASSR) shows a compositional bias: low complexity.

The protein belongs to the connexin family. Alpha-type (group II) subfamily. As to quaternary structure, a connexon is composed of a hexamer of connexins. Interacts with TMEM65. As to expression, expressed in most tissues. Highest levels found in eye and brain.

Its subcellular location is the cell membrane. The protein resides in the cell junction. The protein localises to the gap junction. Its function is as follows. One gap junction consists of a cluster of closely packed pairs of transmembrane channels, the connexons, through which materials of low MW diffuse from one cell to a neighboring cell. Plays an essential role in gap junction communication in the ventricles. In Xenopus laevis (African clawed frog), this protein is Gap junction alpha-1 protein (gja1).